Here is a 424-residue protein sequence, read N- to C-terminus: Histidinol dehydrogenase (424 aa).

NAD(+) contacts are provided by Tyr-121, Gln-183, and Asn-206. Ser-229, Gln-251, and His-254 together coordinate substrate. 2 residues coordinate Zn(2+): Gln-251 and His-254. Catalysis depends on proton acceptor residues Glu-319 and His-320. Substrate is bound by residues His-320, Asp-353, Glu-407, and His-412. Zn(2+) is bound at residue Asp-353. Residue His-412 participates in Zn(2+) binding.

Belongs to the histidinol dehydrogenase family. The cofactor is Zn(2+).

The catalysed reaction is L-histidinol + 2 NAD(+) + H2O = L-histidine + 2 NADH + 3 H(+). Its pathway is amino-acid biosynthesis; L-histidine biosynthesis; L-histidine from 5-phospho-alpha-D-ribose 1-diphosphate: step 9/9. Its function is as follows. Catalyzes the sequential NAD-dependent oxidations of L-histidinol to L-histidinaldehyde and then to L-histidine. The protein is Histidinol dehydrogenase of Geobacillus kaustophilus (strain HTA426).